A 348-amino-acid polypeptide reads, in one-letter code: Dihydroorotase (348 aa).

Zn(2+) is bound by residues histidine 17 and histidine 19. Residues 19-21 (HLR) and asparagine 45 contribute to the substrate site. Residues lysine 103, histidine 140, and histidine 178 each coordinate Zn(2+). Residue lysine 103 is modified to N6-carboxylysine. Position 140 (histidine 140) interacts with substrate. Leucine 223 lines the substrate pocket. Aspartate 251 contributes to the Zn(2+) binding site. Residue aspartate 251 is part of the active site. Substrate contacts are provided by histidine 255 and alanine 267.

The protein belongs to the metallo-dependent hydrolases superfamily. DHOase family. Class II DHOase subfamily. In terms of assembly, homodimer. Zn(2+) serves as cofactor.

The enzyme catalyses (S)-dihydroorotate + H2O = N-carbamoyl-L-aspartate + H(+). Its pathway is pyrimidine metabolism; UMP biosynthesis via de novo pathway; (S)-dihydroorotate from bicarbonate: step 3/3. Functionally, catalyzes the reversible cyclization of carbamoyl aspartate to dihydroorotate. This chain is Dihydroorotase, found in Escherichia coli O157:H7.